Here is a 392-residue protein sequence, read N- to C-terminus: Stilbene synthase 5 (392 aa).

Position 55–58 (55–58 (KFNR)) interacts with substrate. Residue cysteine 164 is part of the active site. Substrate-binding positions include leucine 267 and 305–307 (GGP).

Belongs to the thiolase-like superfamily. Chalcone/stilbene synthases family. Homodimer.

The protein resides in the cytoplasm. It carries out the reaction 4-coumaroyl-CoA + 3 malonyl-CoA + 3 H(+) = trans-resveratrol + 4 CO2 + 4 CoA. Its pathway is phytoalexin biosynthesis; 3,4',5-trihydroxystilbene biosynthesis; 3,4',5-trihydroxystilbene from trans-4-coumarate: step 2/2. Functionally, mediates resistance to pathogens which are sensitive to stilbenes. The chain is Stilbene synthase 5 from Vitis vinifera (Grape).